Consider the following 424-residue polypeptide: UDP-N-acetylglucosamine 1-carboxyvinyltransferase (424 aa).

Position 22–23 (22–23) interacts with phosphoenolpyruvate; it reads KN. Position 93 (arginine 93) interacts with UDP-N-acetyl-alpha-D-glucosamine. The active-site Proton donor is cysteine 117. Cysteine 117 carries the post-translational modification 2-(S-cysteinyl)pyruvic acid O-phosphothioketal. Residues 162 to 165, aspartate 307, and isoleucine 329 contribute to the UDP-N-acetyl-alpha-D-glucosamine site; that span reads KVSV.

Belongs to the EPSP synthase family. MurA subfamily.

The protein localises to the cytoplasm. It catalyses the reaction phosphoenolpyruvate + UDP-N-acetyl-alpha-D-glucosamine = UDP-N-acetyl-3-O-(1-carboxyvinyl)-alpha-D-glucosamine + phosphate. It functions in the pathway cell wall biogenesis; peptidoglycan biosynthesis. Its function is as follows. Cell wall formation. Adds enolpyruvyl to UDP-N-acetylglucosamine. This is UDP-N-acetylglucosamine 1-carboxyvinyltransferase from Glaesserella parasuis serovar 5 (strain SH0165) (Haemophilus parasuis).